Here is a 420-residue protein sequence, read N- to C-terminus: Pyrin and HIN domain-containing protein 1 (420 aa).

Positions 1 to 87 (MVNEYKRIVL…ANKLKNEKAK (87 aa)) constitute a Pyrin domain. Disordered stretches follow at residues 82-201 (KNEK…SSSA) and 216-236 (RLKNVPKEPSEENGHQQGSKK). Positions 87–102 (KAKRTRTGKRKTAAKR) are enriched in basic residues. Polar residues-rich tracts occupy residues 108 to 118 (PSTSQPMSTTN) and 126 to 151 (GRSTPDTQVAQLSLPTASRRNQAIQI). Low complexity predominate over residues 152-169 (SPTIASSSGQTSSRSSET). Polar residues predominate over residues 170-201 (LQSIIQSPKTPKRPSSSILDPPVSSGTASSSA). The 198-residue stretch at 219–416 (NVPKEPSEEN…STTHSNMQVI (198 aa)) folds into the HIN-200 domain. The span at 220–229 (VPKEPSEENG) shows a compositional bias: basic and acidic residues.

This sequence belongs to the HIN-200 family.

Its subcellular location is the nucleus. The protein is Pyrin and HIN domain-containing protein 1 of Mus musculus (Mouse).